Reading from the N-terminus, the 501-residue chain is Flagellin (501 aa).

It belongs to the bacterial flagellin family.

It localises to the secreted. The protein resides in the bacterial flagellum. Its function is as follows. Flagellin is the subunit protein which polymerizes to form the filaments of bacterial flagella. The sequence is that of Flagellin (fliC) from Salmonella choleraesuis (strain SC-B67).